The sequence spans 324 residues: Putative glycosyltransferase R655 (324 aa).

The protein belongs to the glycosyltransferase 25 family.

The chain is Putative glycosyltransferase R655 from Acanthamoeba polyphaga (Amoeba).